Here is a 170-residue protein sequence, read N- to C-terminus: Protein SprT (170 aa).

The SprT-like domain maps to 22-163 (LQQANLTLQT…RCRRCGKTLR (142 aa)). A Zn(2+)-binding site is contributed by histidine 78. Residue glutamate 79 is part of the active site. Histidine 82 lines the Zn(2+) pocket.

Belongs to the SprT family. Zn(2+) is required as a cofactor.

The protein localises to the cytoplasm. This Pectobacterium atrosepticum (strain SCRI 1043 / ATCC BAA-672) (Erwinia carotovora subsp. atroseptica) protein is Protein SprT.